Reading from the N-terminus, the 922-residue chain is Golgi-associated RAB2 interactor protein 5B (922 aa).

6 disordered regions span residues 244–264 (DVRK…DRTH), 292–317 (QSSP…SPSH), 373–404 (TPYS…KAPS), 424–597 (AVPA…TQET), 758–830 (QPES…LRPS), and 842–869 (ATAR…LATV). Polar residues predominate over residues 292 to 305 (QSSPKACTSASDEA). Over residues 431–441 (KPPPGLAPPQK) the composition is skewed to pro residues. Low complexity-rich tracts occupy residues 442–458 (APAA…VPAP) and 471–495 (KAPA…ASAV). The segment covering 496 to 507 (PAPPQKTPPPSQ) has biased composition (pro residues). Residues 758 to 788 (QPESHTWVKEGKRPWGEMKEQPWGEMKEPPW) are compositionally biased toward basic and acidic residues.

This sequence belongs to the GARIN family.

The chain is Golgi-associated RAB2 interactor protein 5B from Homo sapiens (Human).